The sequence spans 973 residues: Splicing regulator ARVCF (973 aa).

The tract at residues Val-95–Thr-123 is disordered. Thr-103 and Thr-105 each carry phosphothreonine. A compositionally biased stretch (polar residues) spans Thr-103–Asp-115. Arg-171 is subject to Omega-N-methylarginine. Disordered regions lie at residues Arg-233–His-254 and Arg-267–Arg-331. Ser-268 carries the post-translational modification Phosphoserine. Over residues Ala-271–Pro-281 the composition is skewed to acidic residues. Residues Arg-289–Glu-303 are compositionally biased toward basic and acidic residues. Phosphoserine occurs at positions 333, 336, 344, and 346. ARM repeat units follow at residues Ser-349–Phe-388, Glu-391–Tyr-430, Ala-434–Thr-468, Leu-469–Ser-509, Leu-527–Asn-566, and Met-576–Ala-623. The interval Tyr-593–Ala-623 is disordered. Ser-607 is modified (phosphoserine). Residues Gln-608–Lys-624 carry the Nuclear localization signal motif. At Thr-637 the chain carries Phosphothreonine. ARM repeat units follow at residues Pro-641–Ala-681, Thr-694–Leu-733, Asp-734–Asn-776, and Thr-777–Leu-821. A required for interaction with RNA-binding proteins DDX5, HNRNPH2 and SRSF1 and with mRNAs region spans residues Val-771–Cys-955. Positions Phe-844 to Ala-926 are disordered. Residue Ser-865 is modified to Phosphoserine. Residue Thr-866 is modified to Phosphothreonine. A compositionally biased stretch (basic and acidic residues) spans Lys-872 to Thr-881.

This sequence belongs to the beta-catenin family. Component of a ribonucleoprotein complex containing mRNAs and RNA-binding proteins including DDX5, HNRNPH2 and SRSF1 as well as ARVCF. Interacts (via the extreme C-terminus) with FRMPD2 (via the PDZ 2 domain). Interacts with CCDC85B. Expressed in optic nerve sheath envelope (at protein level). Expressed in heart (at protein level).

The protein localises to the cell junction. It localises to the adherens junction. Its subcellular location is the nucleus. The protein resides in the cytoplasm. In terms of biological role, contributes to the regulation of alternative splicing of pre-mRNAs. The polypeptide is Splicing regulator ARVCF (Rattus norvegicus (Rat)).